Consider the following 308-residue polypeptide: Porphobilinogen deaminase (308 aa).

Position 240 is an S-(dipyrrolylmethanemethyl)cysteine (cysteine 240).

It belongs to the HMBS family. Monomer. It depends on dipyrromethane as a cofactor.

The enzyme catalyses 4 porphobilinogen + H2O = hydroxymethylbilane + 4 NH4(+). The protein operates within porphyrin-containing compound metabolism; protoporphyrin-IX biosynthesis; coproporphyrinogen-III from 5-aminolevulinate: step 2/4. Its function is as follows. Tetrapolymerization of the monopyrrole PBG into the hydroxymethylbilane pre-uroporphyrinogen in several discrete steps. The polypeptide is Porphobilinogen deaminase (Maridesulfovibrio salexigens (strain ATCC 14822 / DSM 2638 / NCIMB 8403 / VKM B-1763) (Desulfovibrio salexigens)).